A 205-amino-acid chain; its full sequence is Dr1-associated corepressor (205 aa).

In terms of domain architecture, Histone-fold spans 14–77 (PARIKKIMQT…SHLKQCIELE (64 aa)). Residues 91–205 (PDMQGDGEDN…EAEDEEDYDS (115 aa)) form a disordered region. The span at 98 to 108 (EDNHTDGDKGP) shows a compositional bias: basic and acidic residues. Residues 138-155 (SEQEDESEDTDTDGEEET) show a composition bias toward acidic residues. Pro residues predominate over residues 172 to 193 (PPTPFMPFTSPLPLPPAPPGPS). Residues 196–205 (EAEDEEDYDS) are compositionally biased toward acidic residues.

Belongs to the NC2 alpha/DRAP1 family. Heterodimer with DR1. Binds BTAF1. Post-translationally, phosphorylation reduces DNA binding, but has no effect on heterodimerization and TBP binding.

It localises to the nucleus. Functionally, the association of the DR1/DRAP1 heterodimer with TBP results in a functional repression of both activated and basal transcription of class II genes. This interaction precludes the formation of a transcription-competent complex by inhibiting the association of TFIIA and/or TFIIB with TBP. Can bind to DNA on its own. In Rattus norvegicus (Rat), this protein is Dr1-associated corepressor.